Reading from the N-terminus, the 800-residue chain is MMLRKKTKQLISSILILVLLLSLFPTALAAEGNTREDNFKHLLGNDNVKRPSEAGALQLQEVDGQMTLVDQHGEKIQLRGMSTHGLQWFPEILNDNAYKALANDWESNMIRLAMYVGENGYASNPELIKSRVIKGIDLAIENDMYVIVDWHVHAPGDPRDPVYAGAEDFFRDIAALYPNNPHIIYELANEPSSNNNGGAGIPNNEEGWNAVKEYADPIVEMLRDSGNADDNIIIVGSPNWSQRPDLAADNPIDDHHTMYTVHFYTGSHAASTESYPPETPNSERGNVMSNTRYALENGVAVFATEWGTSQANGDGGPYFDEADVWIEFLNENNISWANWSLTNKNEVSGAFTPFELGKSNATSLDPGPDQVWVPEELSLSGEYVRARIKGVNYEPIDRTKYTKVLWDFNDGTKQGFGVNGDSPVEDVVIENEAGALKLSGLDASNDVSEGNYWANARLSADGWGKSVDILGAEKLTMDVIVDEPTTVSIAAIPQGPSANWVNPNRAIKVEPTNFVPLEDKFKAELTITSADSPSLEAIAMHAENNNINNIILFVGTEGADVIYLDNIKVIGTEVEIPVVHDPKGEAVLPSVFEDGTRQGWDWAGESGVKTALTIEEANGSNALSWEFGYPEVKPSDNWATAPRLDFWKSDLVRGENDYVTFDFYLDPVRATEGAMNINLVFQPPTNGYWVQAPKTYTINFDELEEPNQVNGLYHYEVKINVRDITNIQDDTLLRNMMIIFADVESDFAGRVFVDNVRFEGAATTEPVEPEPVDPGEETPPVDEKEAKTEQKEAEKEEKEE.

A signal peptide spans 1–30 (MMLRKKTKQLISSILILVLLLSLFPTALAA). Glu190 acts as the Proton donor in catalysis. The Nucleophile role is filled by Glu305. Residues 761-800 (AATTEPVEPEPVDPGEETPPVDEKEAKTEQKEAEKEEKEE) form a disordered region. Acidic residues predominate over residues 767-780 (VEPEPVDPGEETPP). The span at 781-800 (VDEKEAKTEQKEAEKEEKEE) shows a compositional bias: basic and acidic residues.

This sequence belongs to the glycosyl hydrolase 5 (cellulase A) family.

The catalysed reaction is Endohydrolysis of (1-&gt;4)-beta-D-glucosidic linkages in cellulose, lichenin and cereal beta-D-glucans.. This chain is Endoglucanase, found in Halalkalibacter akibai (strain ATCC 43226 / DSM 21942 / CIP 109018 / JCM 9157 / 1139) (Bacillus akibai).